The primary structure comprises 331 residues: MNLKNRHFLKLLDFTPEEITTYLDLAAELKDAKKAGREIQRMKGKNIALIFEKTSTRTRCAFEVAARDQGADATYLEPSASQIGHKESIKDTARVLGRMYDAIEYRGFAQETVEELAKYAGVPVFNGLTNEFHPTQMLADALTMREHSGKPLNQTAFAYVGDARYNMGNSLLILGAKLGMDVRIGAPQSLWPSEGIIAAAHAAAKETGAKITLTENAHEAVKGVGFIHTDVWVSMGEPKEVWQERIDLLKDYRVTPELMAASGNPQVKFMHCLPAFHNRETKVGEWIYETFGLNGVEVTEEVFESPAGIVFDQAENRMHTIKAVMVAALGD.

Residues Ser55 to Thr58, Gln82, Arg106, and His133 to Gln136 contribute to the carbamoyl phosphate site. L-ornithine contacts are provided by residues Asn166, Asp230, and Ser234 to Met235. Carbamoyl phosphate is bound by residues Cys272–Leu273 and Arg317.

It belongs to the aspartate/ornithine carbamoyltransferase superfamily. OTCase family.

Its subcellular location is the cytoplasm. It carries out the reaction carbamoyl phosphate + L-ornithine = L-citrulline + phosphate + H(+). It participates in amino-acid biosynthesis; L-arginine biosynthesis; L-arginine from L-ornithine and carbamoyl phosphate: step 1/3. In terms of biological role, reversibly catalyzes the transfer of the carbamoyl group from carbamoyl phosphate (CP) to the N(epsilon) atom of ornithine (ORN) to produce L-citrulline. The sequence is that of Ornithine carbamoyltransferase from Neisseria gonorrhoeae (strain ATCC 700825 / FA 1090).